Consider the following 354-residue polypeptide: Thiamine thiazole synthase (354 aa).

Substrate contacts are provided by residues A83, E104 to A105, G112, and V177. C210 is modified (2,3-didehydroalanine (Cys)). Residues D212, H227, M305, and R315–G317 contribute to the substrate site.

It belongs to the THI4 family. Homooctamer. Fe cation serves as cofactor. Post-translationally, during the catalytic reaction, a sulfide is transferred from Cys-210 to a reaction intermediate, generating a dehydroalanine residue.

It is found in the cytoplasm. It localises to the nucleus. The enzyme catalyses [ADP-thiazole synthase]-L-cysteine + glycine + NAD(+) = [ADP-thiazole synthase]-dehydroalanine + ADP-5-ethyl-4-methylthiazole-2-carboxylate + nicotinamide + 3 H2O + 2 H(+). Functionally, involved in biosynthesis of the thiamine precursor thiazole. Catalyzes the conversion of NAD and glycine to adenosine diphosphate 5-(2-hydroxyethyl)-4-methylthiazole-2-carboxylic acid (ADT), an adenylated thiazole intermediate. The reaction includes an iron-dependent sulfide transfer from a conserved cysteine residue of the protein to a thiazole intermediate. The enzyme can only undergo a single turnover, which suggests it is a suicide enzyme. May have additional roles in adaptation to various stress conditions and in DNA damage tolerance. The protein is Thiamine thiazole synthase of Candida albicans (strain SC5314 / ATCC MYA-2876) (Yeast).